Consider the following 140-residue polypeptide: Oocyte zinc finger protein XlCOF15 (140 aa).

C2H2-type zinc fingers lie at residues 6–28, 34–56, 62–84, 90–112, and 118–140; these read FTCK…QKIH, FTCT…QKVH, FICT…HVIH, FTCA…RAAH, and FICT…LKSH.

This sequence belongs to the krueppel C2H2-type zinc-finger protein family.

The protein localises to the nucleus. May be involved in transcriptional regulation. This Xenopus laevis (African clawed frog) protein is Oocyte zinc finger protein XlCOF15.